Reading from the N-terminus, the 460-residue chain is Phosphoenolpyruvate carboxylase (460 aa).

It belongs to the PEPCase type 2 family. In terms of assembly, homotetramer. Mg(2+) serves as cofactor.

It catalyses the reaction oxaloacetate + phosphate = phosphoenolpyruvate + hydrogencarbonate. Functionally, catalyzes the irreversible beta-carboxylation of phosphoenolpyruvate (PEP) to form oxaloacetate (OAA), a four-carbon dicarboxylic acid source for the tricarboxylic acid cycle. This chain is Phosphoenolpyruvate carboxylase, found in Pyrobaculum arsenaticum (strain DSM 13514 / JCM 11321 / PZ6).